The following is a 141-amino-acid chain: Lutropin subunit beta (141 aa).

The N-terminal stretch at 1–20 is a signal peptide; it reads MEMFQGLLLWLLLNTGGAWA. Intrachain disulfides connect cysteine 29–cysteine 77, cysteine 43–cysteine 92, cysteine 46–cysteine 130, cysteine 54–cysteine 108, cysteine 58–cysteine 110, and cysteine 113–cysteine 120. Asparagine 33 carries an N-linked (GlcNAc...) asparagine glycan.

It belongs to the glycoprotein hormones subunit beta family. Heterodimer of a common alpha chain and a unique beta chain which confers biological specificity to thyrotropin, lutropin, follitropin and gonadotropin.

It is found in the secreted. Promotes spermatogenesis and ovulation by stimulating the testes and ovaries to synthesize steroids. This is Lutropin subunit beta (LHB) from Ailuropoda melanoleuca (Giant panda).